We begin with the raw amino-acid sequence, 105 residues long: N(2)-fixation sustaining protein CowN (105 aa).

It belongs to the CowN family.

Functionally, is required to sustain N(2)-dependent growth in the presence of low levels of carbon monoxide (CO). Probably acts by protecting the N(2) fixation ability of the nitrogenase complex, which is inactivated in the presence of CO. This Tolumonas auensis (strain DSM 9187 / NBRC 110442 / TA 4) protein is N(2)-fixation sustaining protein CowN.